Reading from the N-terminus, the 716-residue chain is Phenylalanine/tyrosine ammonia-lyase (716 aa).

Tyr-110 (proton donor/acceptor) is an active-site residue. The segment at residues 211–213 (ASG) is a cross-link (5-imidazolinone (Ala-Gly)). Ser-212 is modified (2,3-didehydroalanine (Ser)). (E)-cinnamate contacts are provided by Asn-270, Gln-360, Arg-366, Asn-397, Lys-468, Glu-496, and Asn-499.

The protein belongs to the PAL/histidase family. As to quaternary structure, homotetramer. Dimer of dimers. Contains an active site 4-methylidene-imidazol-5-one (MIO), which is formed autocatalytically by cyclization and dehydration of residues Ala-Ser-Gly.

It is found in the cytoplasm. The enzyme catalyses L-phenylalanine = (E)-cinnamate + NH4(+). It carries out the reaction L-tyrosine = (E)-4-coumarate + NH4(+). It functions in the pathway phenylpropanoid metabolism; trans-cinnamate biosynthesis; trans-cinnamate from L-phenylalanine: step 1/1. In terms of biological role, catalyzes the non-oxidative deamination of L-phenylalanine and L-tyrosine to form trans-cinnamic acid and p-coumaric acid respectively with similar efficiencies. Facilitates the commitment step in phenylpropanoid pathways that produce secondary metabolites such as lignins, coumarins and flavonoids. This is Phenylalanine/tyrosine ammonia-lyase (PAL) from Rhodotorula toruloides (Yeast).